Here is a 202-residue protein sequence, read N- to C-terminus: Putative NAD(P)H nitroreductase YodC (202 aa).

FMN-binding positions include R11–S13, Q68–Q70, G155–G156, and R192.

Belongs to the nitroreductase family. The cofactor is FMN.

The protein resides in the cytoplasm. Putative nitroreductase that may contribute to the degradation of aromatic compounds. The protein is Putative NAD(P)H nitroreductase YodC (yodC) of Bacillus subtilis (strain 168).